We begin with the raw amino-acid sequence, 172 residues long: Glutamyl-tRNA(Gln) amidotransferase subunit C-4, mitochondrial (172 aa).

Residues 1-23 (MIRIPFHLRQTPGRTLHSLVRSF) constitute a mitochondrion transit peptide. Residues 51–73 (PSKVPQRPHKSTIDGQSTPTRIP) form a disordered region.

The protein belongs to the GatC family. Subunit of the heterotrimeric GatCAB amidotransferase (AdT) complex, composed of A, B and C subunits.

Its subcellular location is the mitochondrion. The enzyme catalyses L-glutamyl-tRNA(Gln) + L-glutamine + ATP + H2O = L-glutaminyl-tRNA(Gln) + L-glutamate + ADP + phosphate + H(+). Functionally, allows the formation of correctly charged Gln-tRNA(Gln) through the transamidation of misacylated Glu-tRNA(Gln) in the mitochondria. The reaction takes place in the presence of glutamine and ATP through an activated gamma-phospho-Glu-tRNA(Gln). This is Glutamyl-tRNA(Gln) amidotransferase subunit C-4, mitochondrial from Culex quinquefasciatus (Southern house mosquito).